Reading from the N-terminus, the 165-residue chain is MSIDVNNESGTEVDEQAILDIARYALARMRIHPLSELSVIVVDTDAMEQLHIQWMDLPGPTDVMSFPMDELRPPAKDDEEPPQGLLGDIVLCPEVAKKQGEEAPTQHSMDEELQLLTVHGVLHLLGYDHEEPDEKAEMFGLQAAIVDGWRGEHGLTGASPAPTVS.

Positions 119, 123, and 129 each coordinate Zn(2+).

Belongs to the endoribonuclease YbeY family. Zn(2+) is required as a cofactor.

Its subcellular location is the cytoplasm. Single strand-specific metallo-endoribonuclease involved in late-stage 70S ribosome quality control and in maturation of the 3' terminus of the 16S rRNA. The chain is Endoribonuclease YbeY from Streptomyces griseus subsp. griseus (strain JCM 4626 / CBS 651.72 / NBRC 13350 / KCC S-0626 / ISP 5235).